The sequence spans 1531 residues: Probable outer membrane protein PmpD (1531 aa).

A signal peptide spans 1–20 (MSSEKDIKSTCSKFSLSVVA). Positions 1244–1531 (EFDYSTNVWG…EANTGLRLIF (288 aa)) constitute an Autotransporter domain.

This sequence belongs to the PMP outer membrane protein family.

The protein resides in the secreted. The protein localises to the cell wall. Its subcellular location is the cell outer membrane. This chain is Probable outer membrane protein PmpD (pmpD), found in Chlamydia trachomatis serovar D (strain ATCC VR-885 / DSM 19411 / UW-3/Cx).